A 572-amino-acid chain; its full sequence is Laccase-3 (572 aa).

The signal sequence occupies residues 1–18 (MARTTFLVSVSLFVSAVL). 2 Plastocyanin-like domains span residues 21-145 (TVEY…LVIY) and 157-304 (IDDE…LIYE). Residues His82, His84, His127, and His129 each contribute to the Cu cation site. A disulfide bridge links Cys103 with Cys561. Asn182, Asn228, Asn294, Asn367, and Asn405 each carry an N-linked (GlcNAc...) asparagine glycan. The Plastocyanin-like 3 domain occupies 422–540 (DMPTLLKILT…EGFAMVFAEA (119 aa)). Cu cation-binding residues include His470, His473, His475, His522, Cys523, His524, and His528.

Belongs to the multicopper oxidase family. Homodimer. Cu cation is required as a cofactor. As to expression, in mycelia, at a lower level than LCC4.

The protein localises to the secreted. It carries out the reaction 4 hydroquinone + O2 = 4 benzosemiquinone + 2 H2O. Its function is as follows. Lignin degradation and detoxification of lignin-derived products. This is Laccase-3 (LCC3) from Thanatephorus cucumeris (Black scurf of potato).